Reading from the N-terminus, the 607-residue chain is uncharacterized protein (607 aa).

Positions 16-44 form a DNA-binding region, zn(2)-C6 fungal-type; it reads CTVCRKRKLKCDGNKPCGRCIRLNTPKEC.

The protein resides in the nucleus. This is an uncharacterized protein from Saccharomyces cerevisiae (strain ATCC 204508 / S288c) (Baker's yeast).